The primary structure comprises 583 residues: MDLLPPKPKYNPLRNESLSSLEEGASGSTPPEELPSPSASSLGPILPPLPGDDSPTTLCSFFPRMSNLRLANPAGGRPGSKGEPGRAADDGEGIVGAAMPDSGPLPLLRDMNKLSGGGGRRTRVEGGQLGGEEWTRHGSFVNKPTRGWLHPNDKVMGPGVSYLVRYMGCVEVLQSMRALDFNTRTQVTREAISLVCEAVPGAKGATRRRKPCSRPLSSILGRSNLKFAGMPITLTVSTSSLNLMAADCKQIIANHHMQSISFASGGDPDTAEYVAYVAKDPVNQRACHILECPEGLAQDVISTIGQAFELRFKQYLRNPPKLVTPHDRMAGFDGSAWDEEEEEPPDHQYYNDFPGKEPPLGGVVDMRLREGAAPGAARSTAPSAQTPSHLGATLPVGQPVGGDPEVRKQMPPPPPCPGRELFDDPSYVNVQNLDKARQAVGGAGPPNPAVNGSAPRDLFDMRPFEDALRVPPPPQSVSMAEQLRGEPWFHGKLSRREAEALLQLNGDFLVRESTTTPGQYVLTGLQSGQPKHLLLVDPEGVVRTKDHRFESVSHLIGYHMDNHLPIISAGSELCLQQPVERKL.

Residue M1 is modified to N-acetylmethionine. Disordered regions lie at residues 1 to 92 and 113 to 137; these read MDLL…DDGE and KLSG…WTRH. A compositionally biased stretch (low complexity) spans 16–44; sequence ESLSSLEEGASGSTPPEELPSPSASSLGP. S36 is modified (phosphoserine). S139 carries the phosphoserine modification. K154 is modified (N6-acetyllysine). Positions 156–339 constitute a PID domain; the sequence is MGPGVSYLVR…AGFDGSAWDE (184 aa). The segment at 340–487 is CH1; sequence EEEEPPDHQY…SMAEQLRGEP (148 aa). A phosphotyrosine mark is found at Y349 and Y350. Residues 372 to 416 are disordered; the sequence is AAPGAARSTAPSAQTPSHLGATLPVGQPVGGDPEVRKQMPPPPPC. The residue at position 427 (Y427) is a Phosphotyrosine. At S453 the chain carries Phosphoserine. Residues 488–579 enclose the SH2 domain; that stretch reads WFHGKLSRRE…GSELCLQQPV (92 aa).

Interacts with CPNE3; this interaction may mediate the binding of CPNE3 with ERBB2. Interacts with the Trk receptors NTRK1, NTRK2 and NTRK3; in a phosphotyrosine-dependent manner. Interacts with the NPXY motif of tyrosine-phosphorylated IGF1R and INSR in vitro via the PID domain. Once activated, binds to GRB2. Interacts with tyrosine-phosphorylated CD3T and DDR2. Interacts with the N-terminal region of APS. Interacts with phosphorylated LRP1 and IRS4. Interacts with INPP5D/SHIP1 and INPPL1/SHIP2. Interacts with ALK, GAB2, GRB7 and KIT. Interacts with PTPN6/SHP (tyrosine phosphorylated). Identified in a complex containing FGFR4, NCAM1, CDH2, PLCG1, FRS2, SRC, SHC1, GAP43 and CTTN. Interacts with FLT4 (tyrosine-phosphorylated). Interacts with EPHB1 and GRB2; activates the MAPK/ERK cascade to regulate cell migration. Interacts with PDGFRB (tyrosine-phosphorylated). Interacts with ERBB4. Interacts with TEK/TIE2 (tyrosine-phosphorylated). Interacts with PTK2/FAK1. Interacts with CEACAM1; this interaction is CEACAM1-phosphorylation-dependent and mediates interaction with EGFR or INSR resulting in decrease coupling of SHC1 to the MAPK3/ERK1-MAPK1/ERK2 pathway. Interacts (via PID domain) with PEAK1 (when phosphorylated). Found in a complex with PPP1CA, PPP1CC, SHC1 and PEAK1. In terms of processing, phosphorylated by activated epidermal growth factor receptor. Phosphorylated in response to KIT signaling. Tyrosine phosphorylated in response to FLT3 and FLT4 signaling and by ligand-activated ALK. Tyrosine phosphorylated by ligand-activated PDGFRB. Tyrosine phosphorylated by TEK/TIE2. May be tyrosine phosphorylated by activated PTK2/FAK1. Tyrosine phosphorylated by activated PTK2B/PYK2. Dephosphorylation by PTPN2 may regulate interaction with GRB2.

Its subcellular location is the cytoplasm. The protein resides in the cell junction. It localises to the focal adhesion. Signaling adapter that couples activated growth factor receptors to signaling pathways. Participates in a signaling cascade initiated by activated KIT and KITLG/SCF. Participates in signaling downstream of the angiopoietin receptor TEK/TIE2, and plays a role in the regulation of endothelial cell migration and sprouting angiogenesis. This chain is SHC-transforming protein 1 (SHC1), found in Pongo abelii (Sumatran orangutan).